Consider the following 792-residue polypeptide: Phenylalanine--tRNA ligase beta subunit (792 aa).

The region spanning 39 to 147 (GESLGQVVVA…DDAPVGQALA (109 aa)) is the tRNA-binding domain. The B5 domain occupies 400-475 (PQPARIRLRR…RIHGYDRVPT (76 aa)). Mg(2+)-binding residues include Asp-453, Asp-459, Glu-462, and Glu-463. In terms of domain architecture, FDX-ACB spans 698 to 791 (SRFPSVRRDL…IEREHRARIR (94 aa)).

The protein belongs to the phenylalanyl-tRNA synthetase beta subunit family. Type 1 subfamily. As to quaternary structure, tetramer of two alpha and two beta subunits. Mg(2+) serves as cofactor.

The protein resides in the cytoplasm. It carries out the reaction tRNA(Phe) + L-phenylalanine + ATP = L-phenylalanyl-tRNA(Phe) + AMP + diphosphate + H(+). The sequence is that of Phenylalanine--tRNA ligase beta subunit from Xanthomonas euvesicatoria pv. vesicatoria (strain 85-10) (Xanthomonas campestris pv. vesicatoria).